A 414-amino-acid chain; its full sequence is MNIPMRDPVIPGTSMAYHPFLPHRAPDFAMSAVLGHQPPFFPALALPPNGAAALSLPGALAKPIMDQLVGAAETAIPFSSLGQQAAAHLRPLKTLEPEEEVEDDPKVHLEAKELWEQFHKRGTEMVITKSGRRMFPPFKVRCTGLDKKAKYILLMDIVAADDCRYKFHNSRWMVAGKADPEMPKRMYIHPDSPATGEQWMSKVVTFHKLKLTNNISDKHGFTILNSMHKYQPRFHIVRANDILKLPYSTFRTYVFPETEFIAVTAYQNDKITQLKIDNNPFAKGFRDTGNGRREKRKQLTLQSMRVYDERQKKENPTSDESSNEQTAFKCFAQSSCPAVPAVGTSSFKDLCPGEVDRDXDSXDDXXLEXSEWGKISTTTXTHPWXQPAXGRQRVTTXGTKGAAVPKATSSPXTR.

The segment at residues 114 to 287 (LWEQFHKRGT…NNPFAKGFRD (174 aa)) is a DNA-binding region (T-box). The disordered stretch occupies residues 359–414 (XDSXDDXXLEXSEWGKISTTTXTHPWXQPAXGRQRVTTXGTKGAAVPKATSSPXTR).

Its subcellular location is the nucleus. Its function is as follows. Transcriptional repressor involved in developmental processes. Binds to the palindromic T site 5'-TTCACACCTAGGTGTGAA-3' DNA sequence, or a half-site, which are present in the regulatory region of several genes. Probably plays a role in limb pattern formation. The chain is T-box transcription factor TBX3 (TBX3) from Gallus gallus (Chicken).